The sequence spans 202 residues: 3-isopropylmalate dehydratase small subunit (202 aa).

The protein belongs to the LeuD family. LeuD type 1 subfamily. As to quaternary structure, heterodimer of LeuC and LeuD.

It carries out the reaction (2R,3S)-3-isopropylmalate = (2S)-2-isopropylmalate. It functions in the pathway amino-acid biosynthesis; L-leucine biosynthesis; L-leucine from 3-methyl-2-oxobutanoate: step 2/4. Its function is as follows. Catalyzes the isomerization between 2-isopropylmalate and 3-isopropylmalate, via the formation of 2-isopropylmaleate. This is 3-isopropylmalate dehydratase small subunit from Rhizobium rhizogenes (strain K84 / ATCC BAA-868) (Agrobacterium radiobacter).